Here is a 1369-residue protein sequence, read N- to C-terminus: DNA-directed RNA polymerase subunit beta' (1369 aa).

The interval 1–26 is disordered; sequence MTSSSPKTRKSSTKSKAKRGSKSKKA. Residues 7-24 show a composition bias toward basic residues; sequence KTRKSSTKSKAKRGSKSK. Residues C253, C320, C327, and C330 each coordinate Zn(2+). Residues 1294–1369 are disordered; that stretch reads TVDMPSSPVA…LQEEGLLSDE (76 aa). The span at 1342–1351 shows a compositional bias: acidic residues; that stretch reads DDELSAEDQM. Over residues 1357-1369 the composition is skewed to low complexity; that stretch reads LEGLQEEGLLSDE.

Belongs to the RNA polymerase beta' chain family. RpoC2 subfamily. In cyanobacteria the RNAP catalytic core is composed of 2 alpha, 1 beta, 1 beta', 1 gamma and 1 omega subunit. When a sigma factor is associated with the core the holoenzyme is formed, which can initiate transcription. Requires Zn(2+) as cofactor.

The catalysed reaction is RNA(n) + a ribonucleoside 5'-triphosphate = RNA(n+1) + diphosphate. Functionally, DNA-dependent RNA polymerase catalyzes the transcription of DNA into RNA using the four ribonucleoside triphosphates as substrates. This Prochlorococcus marinus (strain NATL2A) protein is DNA-directed RNA polymerase subunit beta'.